A 228-amino-acid polypeptide reads, in one-letter code: Sec-independent protein translocase protein TatB (228 aa).

The chain crosses the membrane as a helical span at residues 1-21 (MFDFGLGELVFVGIIALIVLG). Disordered regions lie at residues 126–162 (LSDG…AETD) and 196–228 (VPHT…VRKS). Residues 206-228 (AISRKRGLRPKHRAKPKLRVRKS) show a composition bias toward basic residues.

The protein belongs to the TatB family. The Tat system comprises two distinct complexes: a TatABC complex, containing multiple copies of TatA, TatB and TatC subunits, and a separate TatA complex, containing only TatA subunits. Substrates initially bind to the TatABC complex, which probably triggers association of the separate TatA complex to form the active translocon.

The protein resides in the cell inner membrane. Its function is as follows. Part of the twin-arginine translocation (Tat) system that transports large folded proteins containing a characteristic twin-arginine motif in their signal peptide across membranes. Together with TatC, TatB is part of a receptor directly interacting with Tat signal peptides. TatB may form an oligomeric binding site that transiently accommodates folded Tat precursor proteins before their translocation. The polypeptide is Sec-independent protein translocase protein TatB (Neisseria meningitidis serogroup C / serotype 2a (strain ATCC 700532 / DSM 15464 / FAM18)).